Reading from the N-terminus, the 79-residue chain is Calcium/calmodulin-dependent protein kinase II inhibitor 2 (79 aa).

The interval 43–69 is inhibitory domain; sequence KRPPKLGQIGRAKRVVIEDDRIDEVLK.

This sequence belongs to the CAMK2N family.

It localises to the nucleus. Its subcellular location is the cytoplasm. The protein resides in the cytosol. Its function is as follows. Potent and specific cellular inhibitor of CaM-kinase II (CAMK2). Traps Ca(2+)/calmodulin on CAMK2. The polypeptide is Calcium/calmodulin-dependent protein kinase II inhibitor 2 (camk2n2) (Xenopus tropicalis (Western clawed frog)).